Here is a 73-residue protein sequence, read N- to C-terminus: uncharacterized protein (73 aa).

This is an uncharacterized protein from Dictyostelium discoideum (Social amoeba).